The primary structure comprises 212 residues: High frequency lysogenization protein HflD homolog (212 aa).

This sequence belongs to the HflD family.

It localises to the cytoplasm. The protein localises to the cell inner membrane. The sequence is that of High frequency lysogenization protein HflD homolog from Stutzerimonas stutzeri (strain A1501) (Pseudomonas stutzeri).